A 306-amino-acid polypeptide reads, in one-letter code: Acetyl-coenzyme A carboxylase carboxyl transferase subunit beta (306 aa).

Positions L25–T294 constitute a CoA carboxyltransferase N-terminal domain.

The protein belongs to the AccD/PCCB family. As to quaternary structure, acetyl-CoA carboxylase is a heterohexamer composed of biotin carboxyl carrier protein (AccB), biotin carboxylase (AccC) and two subunits each of ACCase subunit alpha (AccA) and ACCase subunit beta (AccD).

It is found in the cytoplasm. It catalyses the reaction N(6)-carboxybiotinyl-L-lysyl-[protein] + acetyl-CoA = N(6)-biotinyl-L-lysyl-[protein] + malonyl-CoA. It functions in the pathway lipid metabolism; malonyl-CoA biosynthesis; malonyl-CoA from acetyl-CoA: step 1/1. Its function is as follows. Component of the acetyl coenzyme A carboxylase (ACC) complex. Biotin carboxylase (BC) catalyzes the carboxylation of biotin on its carrier protein (BCCP) and then the CO(2) group is transferred by the transcarboxylase to acetyl-CoA to form malonyl-CoA. The chain is Acetyl-coenzyme A carboxylase carboxyl transferase subunit beta from Allorhizobium ampelinum (strain ATCC BAA-846 / DSM 112012 / S4) (Agrobacterium vitis (strain S4)).